The primary structure comprises 189 residues: Large ribosomal subunit protein bL9 (189 aa).

The protein belongs to the bacterial ribosomal protein bL9 family.

Its function is as follows. Binds to the 23S rRNA. In Brucella ovis (strain ATCC 25840 / 63/290 / NCTC 10512), this protein is Large ribosomal subunit protein bL9.